A 156-amino-acid chain; its full sequence is Small ribosomal subunit protein uS7 (156 aa).

It belongs to the universal ribosomal protein uS7 family. As to quaternary structure, part of the 30S ribosomal subunit. Contacts proteins S9 and S11.

Its function is as follows. One of the primary rRNA binding proteins, it binds directly to 16S rRNA where it nucleates assembly of the head domain of the 30S subunit. Is located at the subunit interface close to the decoding center, probably blocks exit of the E-site tRNA. The chain is Small ribosomal subunit protein uS7 from Erwinia tasmaniensis (strain DSM 17950 / CFBP 7177 / CIP 109463 / NCPPB 4357 / Et1/99).